The following is a 72-amino-acid chain: Large ribosomal subunit protein uL29 (72 aa).

It belongs to the universal ribosomal protein uL29 family.

This is Large ribosomal subunit protein uL29 from Prochlorococcus marinus subsp. pastoris (strain CCMP1986 / NIES-2087 / MED4).